The following is an 86-amino-acid chain: MKNLIAELLLKLAQKEEESKELVAQVEALEIIVTAMLRNMAQNEQEMLIRQVEGALEGVKPDASVPDHDTELLRQYVKKLLRHPRH.

Positions 1–36 (MKNLIAELLLKLAQKEEESKELVAQVEALEIIVTAM) form a coiled coil.

It belongs to the IraP family. In terms of assembly, interacts with RssB.

It is found in the cytoplasm. In terms of biological role, inhibits RpoS proteolysis by regulating RssB activity, thereby increasing the stability of the sigma stress factor RpoS especially during phosphate and magnesium starvation, but also in stationary phase and during nitrogen starvation. Its effect on RpoS stability is due to its interaction with RssB, which probably blocks the interaction of RssB with RpoS, and the consequent delivery of the RssB-RpoS complex to the ClpXP protein degradation pathway. The sequence is that of Anti-adapter protein IraP from Salmonella choleraesuis (strain SC-B67).